Here is a 146-residue protein sequence, read N- to C-terminus: Large ribosomal subunit protein uL15 (146 aa).

Residues 1–13 (MKLHELKPAEGSR) show a composition bias toward basic and acidic residues. Residues 1-57 (MKLHELKPAEGSRKVRNRVGRGTSSGNGKTSGRGQKGQKARSGVGLRPGFEGGQTPL) are disordered. Residues 23–35 (TSSGNGKTSGRGQ) show a composition bias toward gly residues.

This sequence belongs to the universal ribosomal protein uL15 family. As to quaternary structure, part of the 50S ribosomal subunit.

Functionally, binds to the 23S rRNA. The polypeptide is Large ribosomal subunit protein uL15 (Streptococcus thermophilus (strain ATCC BAA-491 / LMD-9)).